A 234-amino-acid chain; its full sequence is Leucyl/phenylalanyl-tRNA--protein transferase (234 aa).

Belongs to the L/F-transferase family.

The protein resides in the cytoplasm. The catalysed reaction is N-terminal L-lysyl-[protein] + L-leucyl-tRNA(Leu) = N-terminal L-leucyl-L-lysyl-[protein] + tRNA(Leu) + H(+). The enzyme catalyses N-terminal L-arginyl-[protein] + L-leucyl-tRNA(Leu) = N-terminal L-leucyl-L-arginyl-[protein] + tRNA(Leu) + H(+). It carries out the reaction L-phenylalanyl-tRNA(Phe) + an N-terminal L-alpha-aminoacyl-[protein] = an N-terminal L-phenylalanyl-L-alpha-aminoacyl-[protein] + tRNA(Phe). Functionally, functions in the N-end rule pathway of protein degradation where it conjugates Leu, Phe and, less efficiently, Met from aminoacyl-tRNAs to the N-termini of proteins containing an N-terminal arginine or lysine. The chain is Leucyl/phenylalanyl-tRNA--protein transferase from Pectobacterium atrosepticum (strain SCRI 1043 / ATCC BAA-672) (Erwinia carotovora subsp. atroseptica).